Reading from the N-terminus, the 431-residue chain is Adenylosuccinate synthetase (431 aa).

GTP contacts are provided by residues 13-19 and 41-43; these read GDEGKGK and GHT. The active-site Proton acceptor is D14. The Mg(2+) site is built by D14 and G41. IMP contacts are provided by residues 14 to 17, 39 to 42, T130, R144, Q225, T240, and R304; these read DEGK and NAGH. The active-site Proton donor is H42. 300 to 306 serves as a coordination point for substrate; that stretch reads ATTGRKR. Residues R306, 332-334, and 415-417 each bind GTP; these read KLD and STG.

Belongs to the adenylosuccinate synthetase family. Homodimer. Requires Mg(2+) as cofactor.

The protein resides in the cytoplasm. The enzyme catalyses IMP + L-aspartate + GTP = N(6)-(1,2-dicarboxyethyl)-AMP + GDP + phosphate + 2 H(+). It functions in the pathway purine metabolism; AMP biosynthesis via de novo pathway; AMP from IMP: step 1/2. Functionally, plays an important role in the de novo pathway of purine nucleotide biosynthesis. Catalyzes the first committed step in the biosynthesis of AMP from IMP. This Shewanella loihica (strain ATCC BAA-1088 / PV-4) protein is Adenylosuccinate synthetase.